The sequence spans 297 residues: tRNA(Ile)-lysidine synthase (297 aa).

16-21 (SGGSDS) contributes to the ATP binding site.

This sequence belongs to the tRNA(Ile)-lysidine synthase family.

The protein localises to the cytoplasm. The enzyme catalyses cytidine(34) in tRNA(Ile2) + L-lysine + ATP = lysidine(34) in tRNA(Ile2) + AMP + diphosphate + H(+). In terms of biological role, ligates lysine onto the cytidine present at position 34 of the AUA codon-specific tRNA(Ile) that contains the anticodon CAU, in an ATP-dependent manner. Cytidine is converted to lysidine, thus changing the amino acid specificity of the tRNA from methionine to isoleucine. The chain is tRNA(Ile)-lysidine synthase from Mesomycoplasma hyopneumoniae (strain 232) (Mycoplasma hyopneumoniae).